Reading from the N-terminus, the 451-residue chain is tRNA-2-methylthio-N(6)-dimethylallyladenosine synthase (451 aa).

The MTTase N-terminal domain occupies 2 to 119 (QNLYIKTYGC…LPDLLDACLA (118 aa)). [4Fe-4S] cluster is bound by residues Cys11, Cys48, Cys82, Cys157, Cys161, and Cys164. Residues 143–377 (GRDGATAFVT…RINGLAQGYA (235 aa)) form the Radical SAM core domain. In terms of domain architecture, TRAM spans 378-441 (QALVGTQQAV…PNSLRGRAAL (64 aa)).

The protein belongs to the methylthiotransferase family. MiaB subfamily. Monomer. It depends on [4Fe-4S] cluster as a cofactor.

It is found in the cytoplasm. The enzyme catalyses N(6)-dimethylallyladenosine(37) in tRNA + (sulfur carrier)-SH + AH2 + 2 S-adenosyl-L-methionine = 2-methylsulfanyl-N(6)-dimethylallyladenosine(37) in tRNA + (sulfur carrier)-H + 5'-deoxyadenosine + L-methionine + A + S-adenosyl-L-homocysteine + 2 H(+). Catalyzes the methylthiolation of N6-(dimethylallyl)adenosine (i(6)A), leading to the formation of 2-methylthio-N6-(dimethylallyl)adenosine (ms(2)i(6)A) at position 37 in tRNAs that read codons beginning with uridine. This Acidithiobacillus ferrooxidans (strain ATCC 23270 / DSM 14882 / CIP 104768 / NCIMB 8455) (Ferrobacillus ferrooxidans (strain ATCC 23270)) protein is tRNA-2-methylthio-N(6)-dimethylallyladenosine synthase.